A 265-amino-acid chain; its full sequence is Signal peptidase I (265 aa).

At 1 to 19 (MQIDTKTNTNKTTAQEWKS) the chain is on the cytoplasmic side. Residues 20–40 (FAFVVCIALLIRILIMEPFTV) traverse the membrane as a helical segment. Residues 41-265 (PTGSMKATIL…IFRNLYNTDE (225 aa)) are Periplasmic-facing. Catalysis depends on residues serine 44 and lysine 107.

It belongs to the peptidase S26 family.

Its subcellular location is the cell inner membrane. The catalysed reaction is Cleavage of hydrophobic, N-terminal signal or leader sequences from secreted and periplasmic proteins.. The chain is Signal peptidase I (lepB) from Rickettsia canadensis (strain McKiel).